The sequence spans 387 residues: Protein RecA, chromosomal (387 aa).

Gly80–Thr87 is an ATP binding site. Positions Glu352 to Asp387 are disordered. Acidic residues predominate over residues Thr378 to Asp387.

This sequence belongs to the RecA family.

It localises to the cytoplasm. Can catalyze the hydrolysis of ATP in the presence of single-stranded DNA, the ATP-dependent uptake of single-stranded DNA by duplex DNA, and the ATP-dependent hybridization of homologous single-stranded DNAs. It interacts with LexA causing its activation and leading to its autocatalytic cleavage. In Lactococcus lactis subsp. lactis (strain IL1403) (Streptococcus lactis), this protein is Protein RecA, chromosomal.